A 341-amino-acid polypeptide reads, in one-letter code: BZIP domain-containing transcription factor BZP4 (341 aa).

4 stretches are compositionally biased toward polar residues: residues 1-32 (MESSWPAQSSFSYYNQGSMQTSSRHASSPTNE), 61-76 (LTESGGDSLPSFSHSL), 128-139 (PLTSHSRSQITH), and 150-163 (YSSSPNLHQLSPVS). 2 disordered regions span residues 1-95 (MESS…PHGM) and 118-254 (TNHS…DKKQ). Low complexity predominate over residues 178 to 192 (SPSSSSFPSSIPRTP). Basic and acidic residues-rich tracts occupy residues 225 to 234 (TGDRKHEKDS) and 242 to 254 (EEYKKLNPKDKKQ). A basic motif region spans residues 250 to 269 (KDKKQVRNRIGARRFRAKRK). The bZIP domain maps to 250–308 (KDKKQVRNRIGARRFRAKRKDYVNQLEAGIRLRDDEITNLQSQLESQRNEINELRLQLK). Positions 279-307 (IRLRDDEITNLQSQLESQRNEINELRLQL) are leucine-zipper.

Belongs to the bZIP family.

It localises to the nucleus. It is found in the cytoplasm. Functionally, transcription factor that promotes the production of melanin, a pigment that serves as antioxidant, reactive oxygen species (ROS) scavenger and that protect fungal pathogens from radiation and host immune responses. The protein is BZIP domain-containing transcription factor BZP4 of Cryptococcus neoformans var. grubii serotype A (strain H99 / ATCC 208821 / CBS 10515 / FGSC 9487) (Filobasidiella neoformans var. grubii).